Reading from the N-terminus, the 293-residue chain is 4-hydroxy-tetrahydrodipicolinate synthase (293 aa).

Pyruvate is bound at residue Thr-46. The Proton donor/acceptor role is filled by Tyr-134. The active-site Schiff-base intermediate with substrate is Lys-162. Ile-204 contributes to the pyruvate binding site.

The protein belongs to the DapA family. In terms of assembly, homotetramer; dimer of dimers.

It localises to the cytoplasm. It carries out the reaction L-aspartate 4-semialdehyde + pyruvate = (2S,4S)-4-hydroxy-2,3,4,5-tetrahydrodipicolinate + H2O + H(+). The protein operates within amino-acid biosynthesis; L-lysine biosynthesis via DAP pathway; (S)-tetrahydrodipicolinate from L-aspartate: step 3/4. Its function is as follows. Catalyzes the condensation of (S)-aspartate-beta-semialdehyde [(S)-ASA] and pyruvate to 4-hydroxy-tetrahydrodipicolinate (HTPA). This Bdellovibrio bacteriovorus (strain ATCC 15356 / DSM 50701 / NCIMB 9529 / HD100) protein is 4-hydroxy-tetrahydrodipicolinate synthase.